A 397-amino-acid chain; its full sequence is 4-O-methyl-glucuronoyl methylesterase (397 aa).

The signal sequence occupies residues 1–18 (MVHLTSALLVAGAAFAAA). Intrachain disulfides connect Cys-31–Cys-65, Cys-212–Cys-347, and Cys-244–Cys-319. The GXSYXG catalytic site motif signature appears at 211 to 216 (GCSRNG). The active-site Nucleophile is the Ser-213. Lys-217, Gln-259, Glu-267, and Trp-310 together coordinate substrate. His-346 acts as the Proton donor/acceptor in catalysis.

The protein belongs to the carbohydrate esterase 15 (CE15) family.

The protein resides in the secreted. It catalyses the reaction a 4-O-methyl-alpha-D-glucuronosyl ester derivative + H2O = 4-O-methyl-alpha-D-glucuronate derivative + an alcohol + H(+). Functionally, glucuronoyl esterase which may play a significant role in biomass degradation, as it is considered to disconnect hemicellulose from lignin through the hydrolysis of the ester bond between 4-O-methyl-D-glucuronic acid residues of glucuronoxylans and aromatic alcohols of lignin. This is 4-O-methyl-glucuronoyl methylesterase (ge2) from Thermothelomyces thermophilus (strain ATCC 42464 / BCRC 31852 / DSM 1799) (Sporotrichum thermophile).